Consider the following 302-residue polypeptide: Nucleotide-binding protein Bamb_2855 (302 aa).

8 to 15 (GISGSGKS) contributes to the ATP binding site. 57–60 (DARS) is a binding site for GTP.

This sequence belongs to the RapZ-like family.

Displays ATPase and GTPase activities. This Burkholderia ambifaria (strain ATCC BAA-244 / DSM 16087 / CCUG 44356 / LMG 19182 / AMMD) (Burkholderia cepacia (strain AMMD)) protein is Nucleotide-binding protein Bamb_2855.